The following is a 321-amino-acid chain: Replication factor C small subunit (321 aa).

An ATP-binding site is contributed by 43 to 50 (GFAGVGKT).

The protein belongs to the activator 1 small subunits family. RfcS subfamily. Heteromultimer composed of small subunits (RfcS) and large subunits (RfcL).

Functionally, part of the RFC clamp loader complex which loads the PCNA sliding clamp onto DNA. The polypeptide is Replication factor C small subunit (Methanosphaera stadtmanae (strain ATCC 43021 / DSM 3091 / JCM 11832 / MCB-3)).